A 416-amino-acid chain; its full sequence is Enterobactin exporter EntS (416 aa).

Topologically, residues 1–21 (MNKQSWLLNLSLLKTHPAFRA) are cytoplasmic. A helical transmembrane segment spans residues 22–42 (VFLARFISIVSLGLLGVAVPV). Residues 43–55 (QIQIMTHSTWQVG) lie on the Periplasmic side of the membrane. The helical transmembrane segment at 56–76 (LSVTLTGGAMFVGLMVGGVLA) threads the bilayer. Residues 77–83 (DRYERKK) are Cytoplasmic-facing. The helical transmembrane segment at 84-104 (VILLARGTCGIGFIGLCLNAL) threads the bilayer. Over 105–109 (LPEPS) the chain is Periplasmic. Residues 110–130 (LLAIYLLGLWDGFFASLGVTA) form a helical membrane-spanning segment. Residues 131-156 (LLAATPALVGRENLMQAGAITMLTVR) are Cytoplasmic-facing. Residues 157-177 (LGSVISPMIGGLLLATGGVAW) traverse the membrane as a helical segment. Residue Asn178 is a topological domain, periplasmic. A helical membrane pass occupies residues 179–199 (YGLAAAGTFITLLPLLSLPAL). The Cytoplasmic portion of the chain corresponds to 200–218 (PPPPQPREHPLKSLLAGFR). The helical transmembrane segment at 219-239 (FLLASPLVGGIALLGGLLTMA) threads the bilayer. Residues 240-256 (SAVRVLYPALADNWQMS) lie on the Periplasmic side of the membrane. A helical membrane pass occupies residues 257-277 (AAQIGFLYAAIPLGAAIGALT). At 278–287 (SGKLAHSVRP) the chain is on the cytoplasmic side. The helical transmembrane segment at 288-307 (GLLMLLSTLGAFLAIGLFGL) threads the bilayer. The Periplasmic portion of the chain corresponds to 308–313 (MPMWIL). Residues 314–336 (GVVCLALFGWLSAVSSLLQYTML) traverse the membrane as a helical segment. Residues 337-356 (QTQTPEAMLGRINGLWTAQN) are Cytoplasmic-facing. Residues 357–377 (VTGDAIGAALLGGLGAMMTPV) traverse the membrane as a helical segment. Ala378 is a topological domain (periplasmic). The chain crosses the membrane as a helical span at residues 379 to 399 (SASASGFGLLIIGVLLLLVLV). Residues 400-416 (ELRRFRQTPPQVTASDS) lie on the Cytoplasmic side of the membrane.

Belongs to the major facilitator superfamily. EntS (TC 2.A.1.38) family.

The protein localises to the cell inner membrane. Its function is as follows. Component of an export pathway for enterobactin. This is Enterobactin exporter EntS from Escherichia coli O127:H6 (strain E2348/69 / EPEC).